The sequence spans 203 residues: MADQQEKDQKLKKQQRSNATIAFACLSFFVCMIGAAYASVPLYRIFCQVTGYGGTTQRVEQYSDTILDKTIKVRFDANTANGLAWDFKPVQREVTVRIGETTMIKYEARNLFDQPTYGRASFNVAPGRAGAYFNKVECFCFTDTTLQPGEDMEMPVVFFVDPEIVNDPDLKDVKTITLSYTFFPIEKPKPVANVKAETPTNGS.

Topologically, residues M1–R16 are cytoplasmic. A helical; Signal-anchor for type II membrane protein membrane pass occupies residues S17–S39. The Periplasmic segment spans residues V40–S203.

The protein belongs to the COX11/CtaG family.

Its subcellular location is the cell inner membrane. Its function is as follows. Exerts its effect at some terminal stage of cytochrome c oxidase synthesis, probably by being involved in the insertion of the copper B into subunit I. The polypeptide is Cytochrome c oxidase assembly protein CtaG (Brucella anthropi (strain ATCC 49188 / DSM 6882 / CCUG 24695 / JCM 21032 / LMG 3331 / NBRC 15819 / NCTC 12168 / Alc 37) (Ochrobactrum anthropi)).